The chain runs to 445 residues: Tubulin beta chain (445 aa).

The short motif at 1 to 4 (MREI) is the MREI motif element. Residues Gln11, Glu69, Ser138, Gly142, Thr143, Gly144, Asn204, and Asn226 each coordinate GTP. Residue Glu69 coordinates Mg(2+). The interval 421–445 (EYQQYQDATAEEEGEGEEEGDEEVA) is disordered. The span at 429–445 (TAEEEGEGEEEGDEEVA) shows a compositional bias: acidic residues. Residue Glu438 is modified to 5-glutamyl polyglutamate.

Belongs to the tubulin family. Dimer of alpha and beta chains. A typical microtubule is a hollow water-filled tube with an outer diameter of 25 nm and an inner diameter of 15 nM. Alpha-beta heterodimers associate head-to-tail to form protofilaments running lengthwise along the microtubule wall with the beta-tubulin subunit facing the microtubule plus end conferring a structural polarity. Microtubules usually have 13 protofilaments but different protofilament numbers can be found in some organisms and specialized cells. The cofactor is Mg(2+). Some glutamate residues at the C-terminus are polyglycylated, resulting in polyglycine chains on the gamma-carboxyl group. Glycylation is mainly limited to tubulin incorporated into axonemes (cilia and flagella) whereas glutamylation is prevalent in neuronal cells, centrioles, axonemes, and the mitotic spindle. Both modifications can coexist on the same protein on adjacent residues, and lowering polyglycylation levels increases polyglutamylation, and reciprocally. The precise function of polyglycylation is still unclear. In terms of processing, some glutamate residues at the C-terminus are polyglutamylated, resulting in polyglutamate chains on the gamma-carboxyl group. Polyglutamylation plays a key role in microtubule severing by spastin (SPAST). SPAST preferentially recognizes and acts on microtubules decorated with short polyglutamate tails: severing activity by SPAST increases as the number of glutamates per tubulin rises from one to eight, but decreases beyond this glutamylation threshold. In terms of tissue distribution, brain.

Its subcellular location is the cytoplasm. The protein localises to the cytoskeleton. In terms of biological role, tubulin is the major constituent of microtubules, a cylinder consisting of laterally associated linear protofilaments composed of alpha- and beta-tubulin heterodimers. Microtubules grow by the addition of GTP-tubulin dimers to the microtubule end, where a stabilizing cap forms. Below the cap, tubulin dimers are in GDP-bound state, owing to GTPase activity of alpha-tubulin. This is Tubulin beta chain from Pseudopleuronectes americanus (Winter flounder).